We begin with the raw amino-acid sequence, 508 residues long: Bifunctional purine biosynthesis protein PurH (508 aa).

Residues 1-144 form the MGS-like domain; sequence MTRALLSVSD…KNFASVLPIV (144 aa).

Belongs to the PurH family.

The enzyme catalyses (6R)-10-formyltetrahydrofolate + 5-amino-1-(5-phospho-beta-D-ribosyl)imidazole-4-carboxamide = 5-formamido-1-(5-phospho-D-ribosyl)imidazole-4-carboxamide + (6S)-5,6,7,8-tetrahydrofolate. It catalyses the reaction IMP + H2O = 5-formamido-1-(5-phospho-D-ribosyl)imidazole-4-carboxamide. The protein operates within purine metabolism; IMP biosynthesis via de novo pathway; 5-formamido-1-(5-phospho-D-ribosyl)imidazole-4-carboxamide from 5-amino-1-(5-phospho-D-ribosyl)imidazole-4-carboxamide (10-formyl THF route): step 1/1. Its pathway is purine metabolism; IMP biosynthesis via de novo pathway; IMP from 5-formamido-1-(5-phospho-D-ribosyl)imidazole-4-carboxamide: step 1/1. This is Bifunctional purine biosynthesis protein PurH from Leuconostoc mesenteroides subsp. mesenteroides (strain ATCC 8293 / DSM 20343 / BCRC 11652 / CCM 1803 / JCM 6124 / NCDO 523 / NBRC 100496 / NCIMB 8023 / NCTC 12954 / NRRL B-1118 / 37Y).